The following is a 94-amino-acid chain: Small ribosomal subunit protein uS19m (94 aa).

This sequence belongs to the universal ribosomal protein uS19 family.

The protein resides in the mitochondrion. The sequence is that of Small ribosomal subunit protein uS19m (RPS19) from Petunia hybrida (Petunia).